The following is an 81-amino-acid chain: Small ribosomal subunit protein bS16 (81 aa).

It belongs to the bacterial ribosomal protein bS16 family.

This Desulfotalea psychrophila (strain LSv54 / DSM 12343) protein is Small ribosomal subunit protein bS16.